The primary structure comprises 220 residues: UPF0319 protein YccT (220 aa).

A signal peptide spans 1–20 (MKAGTLTLLIALCLPISVSA).

The protein belongs to the UPF0319 family.

The polypeptide is UPF0319 protein YccT (Escherichia fergusonii (strain ATCC 35469 / DSM 13698 / CCUG 18766 / IAM 14443 / JCM 21226 / LMG 7866 / NBRC 102419 / NCTC 12128 / CDC 0568-73)).